We begin with the raw amino-acid sequence, 462 residues long: Chitinase-like mite allergen Der p 18.0101 (462 aa).

A signal peptide spans 1–25 (MTRLSFTVLIFLAAYFGSNIRPNVA). Residues 29–378 (PKTVCYYESW…HAINSNYFRG (350 aa)) enclose the GH18 domain. A disulfide bridge links Cys-33 with Cys-58. Residues Asn-338 and Asn-441 are each glycosylated (N-linked (GlcNAc...) asparagine). One can recognise a Chitin-binding type-2 domain in the interval 404 to 462 (VFHCHQEGFFRDKTYCAKYYECKKGDFGLEQTVHHCPNHSQAFDEVSRTCVDHAKIPGC). Cys-439 and Cys-453 are disulfide-bonded.

Belongs to the glycosyl hydrolase 18 family. Chitinase class II subfamily. As to expression, expressed in the peritrophic matrix of the midgut, and only very weakly in fecal pellets.

It localises to the secreted. In terms of biological role, probably a non-catalytic chitinase-like protein, which binds to insoluble chitin and enhances the activity of the catalytic chitinases. Has weak chitin-binding activity. This is Chitinase-like mite allergen Der p 18.0101 from Dermatophagoides pteronyssinus (European house dust mite).